The sequence spans 236 residues: 7-cyano-7-deazaguanine synthase (236 aa).

7 to 17 (CSGGLDSVSLA) is a binding site for ATP. Zn(2+) is bound by residues cysteine 185, cysteine 193, cysteine 196, and cysteine 199.

The protein belongs to the QueC family. Zn(2+) is required as a cofactor.

It carries out the reaction 7-carboxy-7-deazaguanine + NH4(+) + ATP = 7-cyano-7-deazaguanine + ADP + phosphate + H2O + H(+). It participates in purine metabolism; 7-cyano-7-deazaguanine biosynthesis. Catalyzes the ATP-dependent conversion of 7-carboxy-7-deazaguanine (CDG) to 7-cyano-7-deazaguanine (preQ(0)). The polypeptide is 7-cyano-7-deazaguanine synthase (Rhizobium etli (strain CIAT 652)).